The chain runs to 366 residues: GTP-binding protein 10 (366 aa).

The region spanning 13–148 (GNFIDNLRIF…RIVHLDLKVI (136 aa)) is the Obg domain. The OBG-type G domain maps to 149–344 (ADVGLVGFPN…LKSCIRKALD (196 aa)). GTP-binding positions include 155-162 (GFPNAGKS), 202-206 (DLPGL), and 278-281 (NKMD). The span at 346–355 (QDGKESDAHR) shows a compositional bias: basic and acidic residues. Positions 346-366 (QDGKESDAHRSKQLLNLQSSS) are disordered.

Belongs to the TRAFAC class OBG-HflX-like GTPase superfamily. OBG GTPase family.

It is found in the nucleus. Its subcellular location is the nucleolus. Functionally, may be involved in the ribosome maturation process. The chain is GTP-binding protein 10 (Gtpbp10) from Mus musculus (Mouse).